Consider the following 50-residue polypeptide: Large ribosomal subunit protein bL32 (50 aa).

A compositionally biased stretch (basic residues) spans 1-26; sequence MAVPKRRVSHTRSAKRRTHYKITLKK. Residues 1 to 50 are disordered; the sequence is MAVPKRRVSHTRSAKRRTHYKITLKKPVKDSDGSWKMPHMVNPNTGEYKN.

It belongs to the bacterial ribosomal protein bL32 family.

The chain is Large ribosomal subunit protein bL32 from Aliarcobacter butzleri (strain RM4018) (Arcobacter butzleri).